The primary structure comprises 403 residues: Tripartite motif-containing protein 59 (403 aa).

An RING-type zinc finger spans residues cysteine 10 to arginine 60. A B box-type zinc finger spans residues proline 92–leucine 134. Residues cysteine 97, histidine 100, cysteine 120, and histidine 126 each contribute to the Zn(2+) site. Residues leucine 163 to serine 246 are a coiled coil. A helical membrane pass occupies residues isoleucine 329 to asparagine 349.

The protein belongs to the TRIM/RBCC family. Interacts with ECSIT.

The protein localises to the endoplasmic reticulum membrane. It catalyses the reaction S-ubiquitinyl-[E2 ubiquitin-conjugating enzyme]-L-cysteine + [acceptor protein]-L-lysine = [E2 ubiquitin-conjugating enzyme]-L-cysteine + N(6)-ubiquitinyl-[acceptor protein]-L-lysine.. Its pathway is protein modification; protein ubiquitination. In terms of biological role, E3 ubiquitin ligase involved in different processes such as development and immune response. Serves as a negative regulator for innate immune signaling pathways by suppressing RLR-induced activation of IRF3/7 and NF-kappa-B via interaction with adapter ECSIT. Regulates autophagy through modulating both the transcription and the ubiquitination of BECN1. On the one hand, regulates the transcription of BECN1 through negatively modulating the NF-kappa-B pathway. On the other hand, regulates TRAF6-mediated 'Lys-63'-linked ubiquitination of BECN1, thus affecting the formation of the BECN1-PIK3C3 complex. In addition, mediates 'Lys-48'-linked ubiquitination of TRAF6 and thereby promotes TRAF6 proteasomal degradation. Also acts as a critical regulator for early embryo development from blastocyst stage to gastrula through modulating F-actin assembly and WASH1 'Lys-63'-linked ubiquitination. The protein is Tripartite motif-containing protein 59 (TRIM59) of Homo sapiens (Human).